A 633-amino-acid chain; its full sequence is DNA topoisomerase 1 (633 aa).

Residues 6–115 form the Toprim domain; it reads KKYIVVESPA…KNRIVFSEIT (110 aa). Positions 12 and 84 each coordinate Mg(2+). In terms of domain architecture, Topo IA-type catalytic spans 130 to 543; the sequence is DMKKVRAQLA…EFYESFSSVF (414 aa). Residues 164 to 169 are interaction with DNA; that stretch reads SAGRVQ. Tyrosine 288 acts as the O-(5'-phospho-DNA)-tyrosine intermediate in catalysis. 2 cysteine pairs are disulfide-bonded: cysteine 559–cysteine 578 and cysteine 561–cysteine 580. Residues 559–580 form a C4-type zinc finger; that stretch reads CSCGKEMRLSFGKYGFYLKCEC. A disordered region spans residues 601–633; that stretch reads LGRKDSESGSPDGRSVEGKGNLSEKRRKGKKGS.

The protein belongs to the type IA topoisomerase family. In terms of assembly, monomer. It depends on Mg(2+) as a cofactor.

The enzyme catalyses ATP-independent breakage of single-stranded DNA, followed by passage and rejoining.. In terms of biological role, releases the supercoiling and torsional tension of DNA, which is introduced during the DNA replication and transcription, by transiently cleaving and rejoining one strand of the DNA duplex. Introduces a single-strand break via transesterification at a target site in duplex DNA. The scissile phosphodiester is attacked by the catalytic tyrosine of the enzyme, resulting in the formation of a DNA-(5'-phosphotyrosyl)-enzyme intermediate and the expulsion of a 3'-OH DNA strand. The free DNA strand then undergoes passage around the unbroken strand, thus removing DNA supercoils. Finally, in the religation step, the DNA 3'-OH attacks the covalent intermediate to expel the active-site tyrosine and restore the DNA phosphodiester backbone. This Thermotoga maritima (strain ATCC 43589 / DSM 3109 / JCM 10099 / NBRC 100826 / MSB8) protein is DNA topoisomerase 1.